We begin with the raw amino-acid sequence, 152 residues long: Ribosome maturation factor RimP (152 aa).

Belongs to the RimP family.

The protein resides in the cytoplasm. Functionally, required for maturation of 30S ribosomal subunits. This is Ribosome maturation factor RimP from Serratia proteamaculans (strain 568).